A 688-amino-acid chain; its full sequence is Glycine--tRNA ligase beta subunit (688 aa).

The protein belongs to the class-II aminoacyl-tRNA synthetase family. As to quaternary structure, tetramer of two alpha and two beta subunits.

The protein resides in the cytoplasm. It carries out the reaction tRNA(Gly) + glycine + ATP = glycyl-tRNA(Gly) + AMP + diphosphate. The sequence is that of Glycine--tRNA ligase beta subunit from Histophilus somni (strain 2336) (Haemophilus somnus).